The sequence spans 135 residues: Galectin-1 (135 aa).

Ala2 carries the N-acetylalanine modification. The 132-residue stretch at 4-135 (GLVASNLNLK…DFKIKCVAFE (132 aa)) folds into the Galectin domain. An N6-acetyllysine mark is found at Lys13, Lys19, and Lys29. Ser30 carries the post-translational modification Phosphoserine. A beta-D-galactoside contacts are provided by residues 45–49 (HFNPR), His53, Asn62, and 69–72 (WGAE). At Lys128 the chain carries N6-acetyllysine.

Homodimer. Binds LGALS3BP. Interacts with CD2, CD3, CD4, CD6, CD7, CD43, ALCAM and CD45. Interacts with laminin (via poly-N-acetyllactosamine). Interacts with SUSD2. Interacts with cargo receptor TMED10; the interaction mediates the translocation from the cytoplasm into the ERGIC (endoplasmic reticulum-Golgi intermediate compartment) and thereby secretion.

It localises to the secreted. The protein localises to the extracellular space. The protein resides in the extracellular matrix. Its subcellular location is the cytoplasm. In terms of biological role, lectin that binds beta-galactoside and a wide array of complex carbohydrates. Plays a role in regulating apoptosis, cell proliferation and cell differentiation. Inhibits CD45 protein phosphatase activity and therefore the dephosphorylation of Lyn kinase. Strong inducer of T-cell apoptosis. This Sus scrofa (Pig) protein is Galectin-1 (LGALS1).